The primary structure comprises 764 residues: 5-methyltetrahydropteroyltriglutamate--homocysteine methyltransferase (764 aa).

5-methyltetrahydropteroyltri-L-glutamate contacts are provided by residues 19–22 (RELK) and Lys-113. L-homocysteine-binding positions include 435–437 (IGS) and Glu-488. Residues 435–437 (IGS) and Glu-488 contribute to the L-methionine site. Residues 519–520 (RC) and Trp-565 contribute to the 5-methyltetrahydropteroyltri-L-glutamate site. Residue Asp-603 coordinates L-homocysteine. Asp-603 contacts L-methionine. Residue Glu-609 coordinates 5-methyltetrahydropteroyltri-L-glutamate. Positions 645, 647, and 669 each coordinate Zn(2+). His-698 functions as the Proton donor in the catalytic mechanism. Cys-730 serves as a coordination point for Zn(2+).

The protein belongs to the vitamin-B12 independent methionine synthase family. Zn(2+) is required as a cofactor.

The enzyme catalyses 5-methyltetrahydropteroyltri-L-glutamate + L-homocysteine = tetrahydropteroyltri-L-glutamate + L-methionine. It functions in the pathway amino-acid biosynthesis; L-methionine biosynthesis via de novo pathway; L-methionine from L-homocysteine (MetE route): step 1/1. Catalyzes the transfer of a methyl group from 5-methyltetrahydrofolate to homocysteine resulting in methionine formation. In Desulforamulus reducens (strain ATCC BAA-1160 / DSM 100696 / MI-1) (Desulfotomaculum reducens), this protein is 5-methyltetrahydropteroyltriglutamate--homocysteine methyltransferase.